Consider the following 339-residue polypeptide: DNA-directed RNA polymerase subunit alpha (339 aa).

The segment at 1-233 (MVREEVAGST…DLFLPFLHAE (233 aa)) is alpha N-terminal domain (alpha-NTD). The tract at residues 264-339 (KKGIPLNCIF…IDLLKNKLSF (76 aa)) is alpha C-terminal domain (alpha-CTD).

Belongs to the RNA polymerase alpha chain family. In terms of assembly, in plastids the minimal PEP RNA polymerase catalytic core is composed of four subunits: alpha, beta, beta', and beta''. When a (nuclear-encoded) sigma factor is associated with the core the holoenzyme is formed, which can initiate transcription.

The protein resides in the plastid. It is found in the chloroplast. It carries out the reaction RNA(n) + a ribonucleoside 5'-triphosphate = RNA(n+1) + diphosphate. DNA-dependent RNA polymerase catalyzes the transcription of DNA into RNA using the four ribonucleoside triphosphates as substrates. This chain is DNA-directed RNA polymerase subunit alpha, found in Heteranthelium piliferum (Elymus pilifer).